Consider the following 460-residue polypeptide: Benzyl alcohol O-benzoyltransferase (460 aa).

Catalysis depends on proton acceptor residues H167 and D382.

The protein belongs to the plant acyltransferase family.

The enzyme catalyses benzyl alcohol + benzoyl-CoA = benzyl benzoate + CoA. Its function is as follows. Probably involved in the formation of volatile ester benzylbenzoate. The sequence is that of Benzyl alcohol O-benzoyltransferase (HSR201) from Nicotiana tabacum (Common tobacco).